The sequence spans 502 residues: MFSLQEICRKNIYLLPDWLGEHVVQRLGLYWKKHGTLQRIGDDYVLIQQDLIIPINEALRMAGEEGNDEVIELLLLWEGNIYYAIIGALEGDHDSLAYKLYSQIRDCHNILPLIQDPKIFEKCHDLDESCNISCLVLNAVKHDMLCILQEYKMLLSGGDIQEVFETACRSQKYDIVTWMGQNIAIYNPGVIFDIAFDKMNVSLLSIGYTLLFEHHINNMIENNMDTNSLLMQHLEWAASTGFLHFMLETLKYGGDVTIIELSAAVKYDHRKVLDYFLRRKKLPRETLEKLLLLAICEACSKKTLNLLLSYLNYSVDNIRKKILQYVKQYETTLIIKILWKKRKINLIDPILADFVGYHSYTYLINFMREFSIYPERIIKMAARVAREDLVIKFSKKVCKDPIDRLNYLKTLVYTMRHKAGKRVLIYTIHNLYKASYLESKEMFKLARFYARHDATFQFISICHDLSKLNIDIKNLLSECLEIAIKNNYPQLIKAIKMDMNYE.

The protein belongs to the asfivirus MGF 505 family.

Its function is as follows. Plays a role in virus cell tropism, and may be required for efficient virus replication in macrophages. In Ornithodoros (relapsing fever ticks), this protein is Protein MGF 505-5R.